The following is a 542-amino-acid chain: Organic anion transporter 3 (542 aa).

The Cytoplasmic portion of the chain corresponds to 1–9 (MTFSEILDR). Ser4 is modified (phosphoserine). Residues 10 to 30 (VGSMGHFQFLHVAILGLPILN) form a helical membrane-spanning segment. Residues 31–123 (MANHNLLQIF…LVCNSNKLKE (93 aa)) lie on the Extracellular side of the membrane. Asn86 and Asn102 each carry an N-linked (GlcNAc...) asparagine glycan. The helical transmembrane segment at 124–144 (MAQSIFMAGILIGGLVLGDLS) threads the bilayer. Over 145–154 (DRFGRRPILT) the chain is Cytoplasmic. Residues 155-175 (CSYLLLAASGSGAAFSPTFPI) form a helical membrane-spanning segment. Residue Tyr176 is a topological domain, extracellular. The helical transmembrane segment at 177-197 (MVFRFLCGFGISGITLSTVIL) threads the bilayer. Topologically, residues 198–212 (NVEWVPTRMRAIMST) are cytoplasmic. A helical transmembrane segment spans residues 213–233 (ALGYCYTFGQFILPGLAYAIP). Residues 234–236 (QWR) are Extracellular-facing. A helical transmembrane segment spans residues 237–257 (WLQLTVSIPFFVFFLSSWWTP). Over 258-327 (ESIRWLVLSG…FRIPMLRRMT (70 aa)) the chain is Cytoplasmic. The chain crosses the membrane as a helical span at residues 328–348 (FCLSLAWFATGFAYYSLAMGV). Residues 349–354 (EEFGVN) are Extracellular-facing. The helical transmembrane segment at 355–375 (LYILQIIFGGVDVPAKFITIL) threads the bilayer. Over 376–386 (SLSYLGRHTTQ) the chain is Cytoplasmic. A helical transmembrane segment spans residues 387–407 (AAALLLAGGAILALTFVPLDL). The Extracellular portion of the chain corresponds to 408–411 (QTVR). Residues 412-432 (TVLAVFGKGCLSSSFSCLFLY) traverse the membrane as a helical segment. At 433-471 (TSELYPTVIRQTGMGVSNLWTRVGSMVSPLVKITGEVQP) the chain is on the cytoplasmic side. The chain crosses the membrane as a helical span at residues 472-492 (FIPNIIYGITALLGGSAALFL). Residues 493–542 (PETLNQPLPETIEDLENWSLRAKKPKQEPEVEKASQRIPLQPHGPGLGSS) lie on the Extracellular side of the membrane. The segment at 515–542 (KKPKQEPEVEKASQRIPLQPHGPGLGSS) is disordered. Basic and acidic residues predominate over residues 517–527 (PKQEPEVEKAS).

This sequence belongs to the major facilitator (TC 2.A.1) superfamily. Organic cation transporter (TC 2.A.1.19) family. In terms of tissue distribution, strongly expressed in kidney. Weaker expression in brain and skeletal muscle. Expressed in adrenal glands.

It is found in the basolateral cell membrane. It catalyses the reaction estrone 3-sulfate(out) + glutarate(in) = estrone 3-sulfate(in) + glutarate(out). It carries out the reaction estrone 3-sulfate(in) + 2-oxoglutarate(out) = estrone 3-sulfate(out) + 2-oxoglutarate(in). The catalysed reaction is glutarate(in) + 2-oxoglutarate(out) = glutarate(out) + 2-oxoglutarate(in). The enzyme catalyses urate(in) + 2-oxoglutarate(out) = urate(out) + 2-oxoglutarate(in). It catalyses the reaction taurocholate(out) + glutarate(in) = taurocholate(in) + glutarate(out). It carries out the reaction dehydroepiandrosterone 3-sulfate(out) + glutarate(in) = dehydroepiandrosterone 3-sulfate(in) + glutarate(out). The catalysed reaction is prostaglandin F2alpha(out) + glutarate(in) = prostaglandin F2alpha(in) + glutarate(out). The enzyme catalyses prostaglandin F2alpha(out) + 2-oxoglutarate(in) = prostaglandin F2alpha(in) + 2-oxoglutarate(out). It catalyses the reaction (R)-carnitine(out) + 2-oxoglutarate(in) = (R)-carnitine(in) + 2-oxoglutarate(out). It carries out the reaction glutarate(in) + (R)-carnitine(out) = glutarate(out) + (R)-carnitine(in). The catalysed reaction is prostaglandin E2(out) + 2-oxoglutarate(in) = prostaglandin E2(in) + 2-oxoglutarate(out). The enzyme catalyses prostaglandin E2(out) + glutarate(in) = prostaglandin E2(in) + glutarate(out). It catalyses the reaction urate(in) + glutarate(out) = urate(out) + glutarate(in). It carries out the reaction taurocholate(out) + 2-oxoglutarate(in) = taurocholate(in) + 2-oxoglutarate(out). The catalysed reaction is dehydroepiandrosterone 3-sulfate(out) + 2-oxoglutarate(in) = dehydroepiandrosterone 3-sulfate(in) + 2-oxoglutarate(out). The enzyme catalyses kynurenate(out) + a dicarboxylate(in) = kynurenate(in) + a dicarboxylate(out). It catalyses the reaction (indol-3-yl)acetate(out) + a dicarboxylate(in) = (indol-3-yl)acetate(in) + a dicarboxylate(out). It carries out the reaction indoxyl sulfate(out) + a dicarboxylate(in) = indoxyl sulfate(in) + a dicarboxylate(out). The catalysed reaction is N-benzoylglycine(out) + a dicarboxylate(in) = N-benzoylglycine(in) + a dicarboxylate(out). The enzyme catalyses 3-carboxy-4-methyl-5-propyl-2-furanpropanoate(out) + a dicarboxylate(in) = 3-carboxy-4-methyl-5-propyl-2-furanpropanoate(in) + a dicarboxylate(out). It catalyses the reaction (6R)-L-erythro-5,6,7,8-tetrahydrobiopterin(out) + a dicarboxylate(in) = (6R)-L-erythro-5,6,7,8-tetrahydrobiopterin(in) + a dicarboxylate(out). It carries out the reaction L-erythro-7,8-dihydrobiopterin(out) + a dicarboxylate(in) = L-erythro-7,8-dihydrobiopterin(in) + a dicarboxylate(out). The catalysed reaction is L-sepiapterin(out) + a dicarboxylate(in) = L-sepiapterin(in) + a dicarboxylate(out). Functionally, functions as an organic anion/dicarboxylate exchanger that couples organic anion uptake indirectly to the sodium gradient. Transports organic anions such as estrone 3-sulfate (E1S) and urate in exchange for dicarboxylates such as glutarate or ketoglutarate (2-oxoglutarate). Plays an important role in the excretion of endogenous and exogenous organic anions, especially from the kidney and the brain. E1S transport is pH- and chloride-dependent and may also involve E1S/cGMP exchange. Responsible for the transport of prostaglandin E2 (PGE2) and prostaglandin F2(alpha) (PGF2(alpha)) in the basolateral side of the renal tubule. Involved in the transport of neuroactive tryptophan metabolites kynurenate and xanthurenate. Functions as a biopterin transporters involved in the uptake and the secretion of coenzymes tetrahydrobiopterin (BH4), dihydrobiopterin (BH2) and sepiapterin to urine, thereby determining baseline levels of blood biopterins. May be involved in the basolateral transport of steviol, a metabolite of the popular sugar substitute stevioside. May participate in the detoxification/ renal excretion of drugs and xenobiotics, such as the histamine H(2)-receptor antagonists fexofenadine and cimetidine, the antibiotic benzylpenicillin (PCG), the anionic herbicide 2,4-dichloro-phenoxyacetate (2,4-D), the diagnostic agent p-aminohippurate (PAH), the antiviral acyclovir (ACV), and the mycotoxin ochratoxin (OTA), by transporting these exogenous organic anions across the cell membrane in exchange for dicarboxylates such as 2-oxoglutarate. Contributes to the renal uptake of potent uremic toxins (indoxyl sulfate (IS), indole acetate (IA), hippurate/N-benzoylglycine (HA) and 3-carboxy-4-methyl-5-propyl-2-furanpropionate (CMPF)), pravastatin, PCG, E1S and dehydroepiandrosterone sulfate (DHEAS), and is partly involved in the renal uptake of temocaprilat (an angiotensin-converting enzyme (ACE) inhibitor). May contribute to the release of cortisol in the adrenals. Involved in one of the detoxification systems on the choroid plexus (CP), removes substrates such as E1S or taurocholate (TC), PCG, 2,4-D and PAH, from the cerebrospinal fluid (CSF) to the blood for eventual excretion in urine and bile. Also contributes to the uptake of several other organic compounds such as the prostanoids prostaglandin E(2) and prostaglandin F(2-alpha), L-carnitine, and the therapeutic drugs allopurinol, 6-mercaptopurine (6-MP) and 5-fluorouracil (5-FU). Mediates the transport of PAH, PCG, and the statins pravastatin and pitavastatin, from the cerebrum into the blood circulation across the blood-brain barrier (BBB). In summary, plays a role in the efflux of drugs and xenobiotics, helping reduce their undesired toxicological effects on the body. This is Organic anion transporter 3 from Homo sapiens (Human).